The following is a 176-amino-acid chain: Ribosome maturation factor RimM (176 aa).

Residues 99 to 176 enclose the PRC barrel domain; sequence EDEYYWSDLV…RMVVDWERDF (78 aa).

The protein belongs to the RimM family. As to quaternary structure, binds ribosomal protein uS19.

It localises to the cytoplasm. Its function is as follows. An accessory protein needed during the final step in the assembly of 30S ribosomal subunit, possibly for assembly of the head region. Essential for efficient processing of 16S rRNA. May be needed both before and after RbfA during the maturation of 16S rRNA. It has affinity for free ribosomal 30S subunits but not for 70S ribosomes. The sequence is that of Ribosome maturation factor RimM from Psychrobacter sp. (strain PRwf-1).